A 512-amino-acid polypeptide reads, in one-letter code: Respiratory nitrate reductase 1 beta chain (512 aa).

4Fe-4S ferredoxin-type domains are found at residues 7 to 35 (VGMVLNLDKCIGCHTCSVTCKNVWTSREG), 175 to 206 (TFMMYLPRLCEHCLNPACVATCPSGAIYKREE), and 208 to 237 (GIVLIDQDKCRGWRMCITGCPYKKIYFNWK). [4Fe-4S] cluster-binding residues include C16, C19, C22, C26, C184, C187, and C192. Residues C196, C217, and C223 each contribute to the [3Fe-4S] cluster site. [4Fe-4S] cluster-binding residues include C227, C244, C247, C259, and C263.

In terms of assembly, dimer of heterotrimers each composed of an alpha, a beta and a gamma chain. Alpha and beta are catalytic chains; gamma chains are involved in binding the enzyme complex to the cytoplasmic membrane. Requires [4Fe-4S] cluster as cofactor. The cofactor is [3Fe-4S] cluster.

The protein resides in the cell membrane. The catalysed reaction is nitrate + a quinol = a quinone + nitrite + H2O. In terms of biological role, the nitrate reductase enzyme complex allows E.coli to use nitrate as an electron acceptor during anaerobic growth. The beta chain is an electron transfer unit containing four cysteine clusters involved in the formation of iron-sulfur centers. Electrons are transferred from the gamma chain to the molybdenum cofactor of the alpha subunit. This Escherichia coli (strain K12) protein is Respiratory nitrate reductase 1 beta chain (narH).